Reading from the N-terminus, the 120-residue chain is Cytochrome c2 iso-1 (120 aa).

The residue at position 1 (Gln-1) is a Pyrrolidone carboxylic acid. Residues Cys-15, Cys-18, His-19, and Met-98 each contribute to the heme c site.

It belongs to the cytochrome c family. Binds 1 heme c group covalently per subunit.

In terms of biological role, cytochrome c2 is found mainly in purple, non-sulfur, photosynthetic bacteria where it functions as the electron donor to the oxidized bacteriochlorophyll in the photophosphorylation pathway. However, it may also have a role in the respiratory chain and is found in some non-photosynthetic bacteria. The protein is Cytochrome c2 iso-1 of Rhodospirillum centenum (Rhodocista centenaria).